Consider the following 87-residue polypeptide: Small ribosomal subunit protein uS15c (87 aa).

It belongs to the universal ribosomal protein uS15 family. As to quaternary structure, part of the 30S ribosomal subunit.

The protein resides in the plastid. The protein localises to the chloroplast. The protein is Small ribosomal subunit protein uS15c (rps15) of Nicotiana tabacum (Common tobacco).